We begin with the raw amino-acid sequence, 654 residues long: Carboxypeptidase Z (654 aa).

A signal peptide spans 1-20 (MPTMPLLLAALAALAVLALA). The region spanning 43 to 165 (THSATCVDLH…APEEEGCYDP (123 aa)) is the FZ domain. 5 cysteine pairs are disulfide-bonded: Cys-48/Cys-114, Cys-56/Cys-107, Cys-98/Cys-134, Cys-123/Cys-162, and Cys-127/Cys-151. N-linked (GlcNAc...) asparagine glycosylation is present at Asn-62. Residues 191–507 (AHHSYAQMVR…EPLLNFLEMV (317 aa)) form the Peptidase M14 domain. 2 residues coordinate Zn(2+): His-253 and Glu-256. A glycan (N-linked (GlcNAc...) asparagine) is linked at Asn-286. His-385 provides a ligand contact to Zn(2+). Glu-477 functions as the Proton donor/acceptor in the catalytic mechanism. The interval 596–630 (FLPGPSRALPRFQDPQREPTQMDFEPPRARRQPAS) is disordered.

This sequence belongs to the peptidase M14 family. Zn(2+) is required as a cofactor.

It localises to the secreted. The protein resides in the extracellular space. It is found in the extracellular matrix. Its activity is regulated as follows. Inhibited by 2-mercaptomethyl-3-guanidinoethylthiopropanoic acid (MGTA) and guanidinoethylmercaptosuccinic acid (GEMSA). Inhibited by chelating agents such as EDTA and EGTA. In terms of biological role, cleaves substrates with C-terminal arginine residues. Probably modulates the Wnt signaling pathway, by cleaving some undefined protein. May play a role in cleavage during prohormone processing. The sequence is that of Carboxypeptidase Z (Cpz) from Mus musculus (Mouse).